The chain runs to 614 residues: uncharacterized protein (614 aa).

4 helical membrane-spanning segments follow: residues 41 to 61, 87 to 107, 157 to 177, and 178 to 198; these read GWIFLLAILTVGTGVMEAVLF, LIGMAALLLISIVWGFLASAV, DTVLTLANMFVYVLVYFITSG, and VVLVALDSWFLLPFITWIILF. An ABC transmembrane type-1 domain is found at 43–330; the sequence is IFLLAILTVG…IMWESARLFE (288 aa). One can recognise an ABC transporter domain in the interval 364–603; sequence IKFNDITFAY…NGLYAKLWNH (240 aa). Residue 397–404 coordinates ATP; it reads GRSGAGKS.

Belongs to the ABC transporter superfamily.

The protein localises to the cell membrane. This is an uncharacterized protein from Haemophilus influenzae (strain ATCC 51907 / DSM 11121 / KW20 / Rd).